Reading from the N-terminus, the 654-residue chain is Tetracycline resistance protein TetQ (654 aa).

One can recognise a tr-type G domain in the interval 1–244; it reads MNIINLGILA…AISSFILPPE (244 aa). Residues 10 to 17, 74 to 78, and 128 to 131 each bind GTP; these read AHIDAGKT, DTPGH, and NKID.

The protein belongs to the TRAFAC class translation factor GTPase superfamily. Classic translation factor GTPase family. TetM/TetO subfamily.

In terms of biological role, abolishes the inhibitory effect of tetracyclin on protein synthesis by a non-covalent modification of the ribosomes. The protein is Tetracycline resistance protein TetQ (tetQ) of Prevotella intermedia.